The sequence spans 83 residues: Large ribosomal subunit protein eL14 (83 aa).

Belongs to the eukaryotic ribosomal protein eL14 family. In terms of assembly, part of the 50S ribosomal subunit.

The chain is Large ribosomal subunit protein eL14 from Thermococcus kodakarensis (strain ATCC BAA-918 / JCM 12380 / KOD1) (Pyrococcus kodakaraensis (strain KOD1)).